The sequence spans 173 residues: Large ribosomal subunit protein uL16 (173 aa).

It belongs to the universal ribosomal protein uL16 family.

This Methanococcus maripaludis (strain DSM 14266 / JCM 13030 / NBRC 101832 / S2 / LL) protein is Large ribosomal subunit protein uL16.